The following is a 240-amino-acid chain: Probable transcriptional regulatory protein HP_0162 (240 aa).

The protein belongs to the TACO1 family.

The protein localises to the cytoplasm. In Helicobacter pylori (strain ATCC 700392 / 26695) (Campylobacter pylori), this protein is Probable transcriptional regulatory protein HP_0162.